Consider the following 546-residue polypeptide: Immunoglobulin-like domain-containing receptor 1 (546 aa).

Positions methionine 1–serine 23 are cleaved as a signal peptide. The 139-residue stretch at leucine 24–lysine 162 folds into the Ig-like V-type domain. Topologically, residues leucine 24–histidine 167 are extracellular. Cysteine 45 and cysteine 145 are disulfide-bonded. Residues tryptophan 168–cysteine 188 form a helical membrane-spanning segment. Topologically, residues tryptophan 189–isoleucine 546 are cytoplasmic. Residues tryptophan 399–isoleucine 546 form a disordered region. A compositionally biased stretch (basic and acidic residues) spans arginine 442–glutamine 457. The segment covering arginine 458–serine 467 has biased composition (basic residues). Phosphoserine occurs at positions 499 and 501. The span at glycine 527–histidine 539 shows a compositional bias: basic and acidic residues.

This sequence belongs to the immunoglobulin superfamily. LISCH7 family. As to quaternary structure, homooligomer. Interacts with MARVELD2 and OCLN; the interaction is required to recruit MARVELD2 to tricellular contacts. Interacts (via C-terminus) with TRA2A, TRA2B and SRSF1. Interacts with PLSCR1.

It localises to the cell membrane. Its subcellular location is the cell junction. The protein localises to the tight junction. It is found in the nucleus. The protein resides in the cytoplasm. Its function is as follows. Maintains epithelial barrier function by recruiting MARVELD2/tricellulin to tricellular tight junctions (tTJs). Crucial for normal hearing by maintaining the structural and functional integrity of tTJs, which are critical for the survival of auditory neurosensory HCs. Mediates fatty acids and lipoproteins-stimulated CCK/cholecystokinin secretion in the small intestine. In the inner ear, may regulate alternative pre-mRNA splicing via binding to TRA2A, TRA2B and SRSF1. In Pongo abelii (Sumatran orangutan), this protein is Immunoglobulin-like domain-containing receptor 1 (ILDR1).